The primary structure comprises 2641 residues: CCR4-NOT transcription complex subunit let-711 (2641 aa).

Positions 660–664 (LSELL) match the LXXLL motif. Disordered regions lie at residues 771-887 (SGRS…QNAQ), 936-963 (TQRQ…PQQQ), 1197-1221 (EGGR…PAAA), 1518-1565 (QSKI…SQGA), and 2034-2054 (GMNN…AGLQ). Composition is skewed to low complexity over residues 774–795 (SSSV…QQQQ), 802–839 (LPPS…SQQQ), and 853–877 (PAQF…HMMG). A compositionally biased stretch (pro residues) spans 951–960 (PQRPSGPPTP). The span at 1205–1221 (GSAQAGSASSTPTPAAA) shows a compositional bias: low complexity. Over residues 2034-2046 (GMNNAMNNGAGNA) the composition is skewed to low complexity. The LXXLL motif lies at 2341 to 2345 (LRVLL). A disordered region spans residues 2609–2641 (AQGSQPQAQPDGAPGPLGNNTGAANQQQNPNTN).

It belongs to the CNOT1 family. As to quaternary structure, component of the CCR4-NOT complex at least composed of ccf-1, ccr-4 and let-711, which is required for germ cell development in hermaphrodites. Within the complex interacts with ccf-1 and ccr-4; the interactions are direct. As to expression, highly expressed in the germline of hermaphrodites.

The protein resides in the nucleus. Scaffolding component of the CCR4-NOT complex which is one of the major cellular mRNA deadenylases and is linked to various cellular processes including bulk mRNA degradation, miRNA-mediated repression, translational repression during translational initiation and general transcription regulation. Positively regulates the accumulation of the CCR4-NOT complex component ccr-1. Within the complex promotes germ cell development and fertility in hermaphrodites. Additional complex functions may be a consequence of its influence on mRNA expression. Its scaffolding function implies its interaction with the catalytic complex module and diverse RNA-binding proteins mediating the complex recruitment to selected mRNA 3'UTRs. Mediates the recruitment of the CCR4-NOT complex to miRNA targets and to the RISC complex. Acts as a transcriptional repressor. Represses the ligand-dependent transcriptional activation by nuclear receptors. In embryos, plays a role in female pronucleus and mitotic spindle positioning during the first cleavage divisions after fertilization. This may partly be through negatively regulating the accumulation of zyg-9 at the centrosome. Negatively regulates the formation of long astral microtubules in developing embryos. Required for the stabilization and degradation of maternal mRNAs such as nos-2 in somatic blastomeres. The chain is CCR4-NOT transcription complex subunit let-711 from Caenorhabditis elegans.